The sequence spans 99 residues: Ribonuclease P protein component 1 (99 aa).

This sequence belongs to the eukaryotic/archaeal RNase P protein component 1 family. Consists of a catalytic RNA component and at least 4-5 protein subunits.

The protein resides in the cytoplasm. It carries out the reaction Endonucleolytic cleavage of RNA, removing 5'-extranucleotides from tRNA precursor.. In terms of biological role, part of ribonuclease P, a protein complex that generates mature tRNA molecules by cleaving their 5'-ends. The polypeptide is Ribonuclease P protein component 1 (Methanococcus vannielii).